Here is a 484-residue protein sequence, read N- to C-terminus: tRNA sulfurtransferase (484 aa).

The THUMP domain occupies 63-167; it reads ERLVEALKCI…NKDLFIVTQR (105 aa). Residues 185-186, Lys-267, Gly-289, and Gln-298 each bind ATP; that span reads LM. A disulfide bridge links Cys-346 with Cys-458. The Rhodanese domain occupies 406–484; sequence IPENAVVVDI…GFKNVKVYRP (79 aa). Cys-458 functions as the Cysteine persulfide intermediate in the catalytic mechanism.

Belongs to the ThiI family.

The protein localises to the cytoplasm. The enzyme catalyses [ThiI sulfur-carrier protein]-S-sulfanyl-L-cysteine + a uridine in tRNA + 2 reduced [2Fe-2S]-[ferredoxin] + ATP + H(+) = [ThiI sulfur-carrier protein]-L-cysteine + a 4-thiouridine in tRNA + 2 oxidized [2Fe-2S]-[ferredoxin] + AMP + diphosphate. It carries out the reaction [ThiS sulfur-carrier protein]-C-terminal Gly-Gly-AMP + S-sulfanyl-L-cysteinyl-[cysteine desulfurase] + AH2 = [ThiS sulfur-carrier protein]-C-terminal-Gly-aminoethanethioate + L-cysteinyl-[cysteine desulfurase] + A + AMP + 2 H(+). The protein operates within cofactor biosynthesis; thiamine diphosphate biosynthesis. Catalyzes the ATP-dependent transfer of a sulfur to tRNA to produce 4-thiouridine in position 8 of tRNAs, which functions as a near-UV photosensor. Also catalyzes the transfer of sulfur to the sulfur carrier protein ThiS, forming ThiS-thiocarboxylate. This is a step in the synthesis of thiazole, in the thiamine biosynthesis pathway. The sulfur is donated as persulfide by IscS. The polypeptide is tRNA sulfurtransferase (Colwellia psychrerythraea (strain 34H / ATCC BAA-681) (Vibrio psychroerythus)).